Consider the following 490-residue polypeptide: Protein dead ringer homolog (490 aa).

Over residues 1 to 33 (MVEDQRRQLMEEEDEERRLILEEQRRRMMRADR) the composition is skewed to basic and acidic residues. 2 disordered regions span residues 1–77 (MVED…AHID) and 106–135 (ITQS…HGGS). Positions 34 to 50 (DEEEEEEEEEEEEEREE) are enriched in acidic residues. Residues 51–76 (DDGRRSEDEMREDEPPGRRETSHAHI) show a composition bias toward basic and acidic residues. Residues 106–117 (ITQSPPLTNGSN) show a composition bias toward polar residues. An ARID domain is found at 202–294 (DSKRKEFLDD…YLYPYECEKK (93 aa)). The segment at 298 to 369 (SPSELQSAID…PPRLSPSTSP (72 aa)) is disordered. Residues 316-325 (PSYHSPHMHP) are compositionally biased toward basic residues. One can recognise an REKLES domain in the interval 389 to 479 (AAMLAELAER…GVLYPRGGTR (91 aa)).

It localises to the nucleus. Functionally, transcription factor involved in skeletogenesis and oral ectoderm patterning. In Strongylocentrotus purpuratus (Purple sea urchin), this protein is Protein dead ringer homolog (dri).